The following is a 562-amino-acid chain: Efflux pump apf11 (562 aa).

Composition is skewed to low complexity over residues methionine 1 to alanine 10 and threonine 18 to threonine 30. Residues methionine 1–proline 36 form a disordered region. A glycan (N-linked (GlcNAc...) asparagine) is linked at asparagine 22. Helical transmembrane passes span leucine 46 to alanine 66, alanine 83 to isoleucine 103, lysine 110 to alanine 130, alanine 141 to threonine 161, valine 169 to glycine 189, tryptophan 200 to leucine 220, glycine 249 to threonine 269, and isoleucine 278 to tryptophan 298. A glycan (N-linked (GlcNAc...) asparagine) is linked at asparagine 312. 6 helical membrane passes run methionine 317–proline 337, leucine 356–valine 376, phenylalanine 382–isoleucine 404, isoleucine 414–alanine 434, valine 447–leucine 467, and phenylalanine 516–isoleucine 536.

It belongs to the major facilitator superfamily. TCR/Tet family.

The protein resides in the membrane. It participates in secondary metabolite biosynthesis. In terms of biological role, efflux pump; part of the gene cluster that mediates the biosynthesis of the cyclic tetrapeptide apicidin F (APF). The sequence is that of Efflux pump apf11 (apf11) from Gibberella fujikuroi (strain CBS 195.34 / IMI 58289 / NRRL A-6831) (Bakanae and foot rot disease fungus).